The following is a 157-amino-acid chain: NADPH-dependent 7-cyano-7-deazaguanine reductase (157 aa).

Catalysis depends on Cys-55, which acts as the Thioimide intermediate. Asp-62 (proton donor) is an active-site residue. Residues 77 to 79 (VES) and 96 to 97 (HE) each bind substrate.

It belongs to the GTP cyclohydrolase I family. QueF type 1 subfamily.

Its subcellular location is the cytoplasm. The catalysed reaction is 7-aminomethyl-7-carbaguanine + 2 NADP(+) = 7-cyano-7-deazaguanine + 2 NADPH + 3 H(+). Its pathway is tRNA modification; tRNA-queuosine biosynthesis. Catalyzes the NADPH-dependent reduction of 7-cyano-7-deazaguanine (preQ0) to 7-aminomethyl-7-deazaguanine (preQ1). The protein is NADPH-dependent 7-cyano-7-deazaguanine reductase of Neisseria meningitidis serogroup C / serotype 2a (strain ATCC 700532 / DSM 15464 / FAM18).